The following is a 1170-amino-acid chain: RNA-binding protein 33 (1170 aa).

Disordered stretches follow at residues 1 to 152 and 199 to 221; these read MAAA…EGHE and KDIKEESDEEEEDDEESGRLRFK. Ala2 carries the post-translational modification N-acetylalanine. Over residues 20–36 the composition is skewed to basic and acidic residues; sequence QFDKPGAERSWRRRAAD. Positions 37–49 are enriched in acidic residues; that stretch reads EDWDSELEDDLLG. Ser41 carries the post-translational modification Phosphoserine. Residues 82 to 108 are compositionally biased toward polar residues; the sequence is FSSQGVTISLNATSGMVTSFELSDNTN. Acidic residues-rich tracts occupy residues 112–126 and 203–214; these read GEQESEYEQEQGEDE and EESDEEEEDDEE. A phosphoserine mark is found at Ser205 and Ser233. Disordered stretches follow at residues 259-708, 721-784, 833-863, and 942-1050; these read FEER…NSNL, MSSS…PDED, QLYAPPPPAEQEEQALSPSPTNGNPLLPFPG, and AVPQ…VPPG. The segment covering 267–278 has biased composition (basic residues); it reads KQGRYSSRRGGR. A compositionally biased stretch (basic and acidic residues) spans 289–306; sequence GDQRRESTERGRMKDHRP. The span at 311-329 shows a compositional bias: pro residues; sequence TQPPVVPQAPPPPPPPPQQ. 3 stretches are compositionally biased toward low complexity: residues 335 to 348, 357 to 372, and 394 to 403; these read LFQPQPLQPLLPVQ, QGMHMPPQLETPRMMM, and TVVTPVQVPL. Residues 419-433 are compositionally biased toward pro residues; the sequence is FPGPPEFPQHTPGPV. The residue at position 470 (Arg470) is an Asymmetric dimethylarginine. 3 stretches are compositionally biased toward pro residues: residues 481-490, 554-568, and 582-630; these read SPPPPPPPPT, FIPPRQPFLPGPGQP, and LHPP…PQHP. Residues 632 to 642 are compositionally biased toward basic residues; that stretch reads QHQHHHHHHHL. Polar residues-rich tracts occupy residues 662 to 708 and 721 to 732; these read QTAQ…NSNL and MSSSRCSATPSA. Residues Ser741 and Ser765 each carry the phosphoserine modification. The stretch at 789–835 forms a coiled coil; sequence LYRLKIEEQKRLREEILKQKELRRQQQAGARKKELLERLAQQQQQLY. Ser951 bears the Phosphoserine mark. Lys960 is covalently cross-linked (Glycyl lysine isopeptide (Lys-Gly) (interchain with G-Cter in SUMO2)). Phosphoserine is present on residues Ser973 and Ser991. At Arg1028 the chain carries Asymmetric dimethylarginine; alternate. An Omega-N-methylarginine; alternate modification is found at Arg1028. The region spanning 1098-1170 is the RRM domain; that stretch reads CVVSVEGLSS…SHINVALIVE (73 aa).

In terms of assembly, associates with the NXF1-NXT1 RNA export complex. Interacts with ALKBH5; facilitating ALKBH5 recruitment to m6A-containing transcripts. Interacts with SENP1; promoting ALKBH5 deSUMOylation and subsequent activation.

It localises to the nucleus. It is found in the cytoplasm. RNA reader protein, which recognizes and binds specific RNAs, thereby regulating RNA metabolic processes, such as mRNA export, mRNA stability and/or translation. Binds a subset of intronless RNAs containing GC-rich elements, such as NORAD, and promotes their nuclear export by recruiting target RNAs to components of the NXF1-NXT1 RNA export machinery. Specifically recognizes and binds N6-methyladenosine (m6A)-containing mRNAs, promoting their demethylation by ALKBH5. Acts as an molecular adapter, which (1) promotes ALKBH5 recruitment to m6A-containing transcripts and (2) activates ALKBH5 demethylase activity by recruiting SENP1, leading to ALKBH5 deSUMOylation and subsequent activation. The polypeptide is RNA-binding protein 33 (Homo sapiens (Human)).